A 419-amino-acid chain; its full sequence is Acyl-coenzyme A thioesterase 6 (419 aa).

Catalysis depends on charge relay system residues S232, D324, and H358. Residues S417–L419 carry the Peroxisome targeting signal motif.

Belongs to the C/M/P thioester hydrolase family. As to expression, highly expressed in white adipose tissue. Detected at lower levels in kidney, liver, brown adipose tissue and brain.

The protein resides in the peroxisome. It catalyses the reaction pristanoyl-CoA + H2O = 2,6,10,14-tetramethylpentadecanoate + CoA + H(+). It carries out the reaction phytanoyl-CoA + H2O = 3,7,11,15-tetramethylhexadecanoate + CoA + H(+). It participates in lipid metabolism; fatty acid metabolism. In terms of biological role, catalyzes the hydrolysis of acyl-CoAs into free fatty acids and coenzyme A (CoASH), regulating their respective intracellular levels. Catalyzes the hydrolysis of phytanoyl-CoA and pristanoyl-CoA, two methyl-branched fatty acids derived from phytol, that enter the body via the diet. This is Acyl-coenzyme A thioesterase 6 from Mus musculus (Mouse).